The chain runs to 365 residues: Peptide chain release factor 2 (365 aa).

Position 251 is an N5-methylglutamine (glutamine 251).

The protein belongs to the prokaryotic/mitochondrial release factor family. Post-translationally, methylated by PrmC. Methylation increases the termination efficiency of RF2.

The protein resides in the cytoplasm. In terms of biological role, peptide chain release factor 2 directs the termination of translation in response to the peptide chain termination codons UGA and UAA. The sequence is that of Peptide chain release factor 2 from Sulfurimonas denitrificans (strain ATCC 33889 / DSM 1251) (Thiomicrospira denitrificans (strain ATCC 33889 / DSM 1251)).